The following is a 223-amino-acid chain: AN1-type zinc finger protein 6 (223 aa).

The A20-type zinc finger occupies 8-42 (SQAPMLCSTGCGFYGNPRTNGMCSVCYKEHLQRQN). Cys-14, Cys-18, Cys-30, and Cys-33 together coordinate Zn(2+). Residues 41-155 (QNSSNGRISP…PSEEQSKSLE (115 aa)) form a disordered region. Residue Ser-49 is modified to Phosphoserine. Composition is skewed to polar residues over residues 77–110 (ALDS…STSV) and 137–148 (SSVSDTTQQPSE). An AN1-type zinc finger spans residues 158–204 (KQKKNRCFMCRKKVGLTGFECRCGNVYCGVHRYSDVHNCSYNYKADA). 8 residues coordinate Zn(2+): Cys-164, Cys-167, Cys-178, Cys-180, Cys-185, His-188, His-194, and Cys-196. Lys-219 carries the post-translational modification N6-acetyllysine.

As to quaternary structure, interacts with PKN1. Interacts with TRAF2. Interacts with mono- and polyubiquitin. Interacts with PEX6. Interacts with PEX5 (Cys-linked ubiquitinated).

It localises to the cytoplasm. Its function is as follows. Involved in regulation of TNF-alpha induced NF-kappa-B activation and apoptosis. Involved in modulation of 'Lys-48'-linked polyubiquitination status of TRAF2 and decreases association of TRAF2 with RIPK1. Required for PTS1 target sequence-dependent protein import into peroxisomes and PEX5 stability; may cooperate with PEX6. In vitro involved in PEX5 export from the cytosol to peroxisomes. The chain is AN1-type zinc finger protein 6 (Zfand6) from Mus musculus (Mouse).